Consider the following 377-residue polypeptide: 8-amino-7-oxononanoate synthase (377 aa).

Position 13 (R13) interacts with substrate. 100–101 (GY) serves as a coordination point for pyridoxal 5'-phosphate. Position 125 (H125) interacts with substrate. S171, H199, and T228 together coordinate pyridoxal 5'-phosphate. At K231 the chain carries N6-(pyridoxal phosphate)lysine. Substrate is bound at residue T345.

Belongs to the class-II pyridoxal-phosphate-dependent aminotransferase family. BioF subfamily. Homodimer. Pyridoxal 5'-phosphate is required as a cofactor.

It carries out the reaction 6-carboxyhexanoyl-[ACP] + L-alanine + H(+) = (8S)-8-amino-7-oxononanoate + holo-[ACP] + CO2. Its pathway is cofactor biosynthesis; biotin biosynthesis. Its function is as follows. Catalyzes the decarboxylative condensation of pimeloyl-[acyl-carrier protein] and L-alanine to produce 8-amino-7-oxononanoate (AON), [acyl-carrier protein], and carbon dioxide. The protein is 8-amino-7-oxononanoate synthase of Nitrosococcus oceani (strain ATCC 19707 / BCRC 17464 / JCM 30415 / NCIMB 11848 / C-107).